The sequence spans 403 residues: L-lactate oxidase (403 aa).

Residues 21–375 (EGSVDFVNVF…KHFKLRHNPY (355 aa)) form the FMN hydroxy acid dehydrogenase domain. Tyrosine 47 contacts pyruvate. FMN-binding positions include 99–101 (PVA), serine 128, and glutamine 150. Pyruvate is bound at residue tyrosine 152. Position 178 (threonine 178) interacts with FMN. Residues arginine 187 and tyrosine 220 each coordinate pyruvate. Lysine 246 is an FMN binding site. Residues histidine 270 and arginine 273 each contribute to the pyruvate site. Histidine 270 acts as the Proton acceptor in catalysis. FMN-binding positions include 301–305 (DSGVR) and arginine 325.

It belongs to the FMN-dependent alpha-hydroxy acid dehydrogenase family. In terms of assembly, homotetramer. FMN serves as cofactor.

It carries out the reaction (S)-lactate + O2 = pyruvate + H2O2. Functionally, catalyzes the oxidation of (S)-lactate (L-lactate) to pyruvate, with a reduction of O2 to H2O2. Is likely involved in the L-lactate aerobic metabolism of S.iniae that enables the bacterium to utilize L-lactate as an energy source for growth under aerobic conditions in the absence (or at low concentrations) of glucose. The protein is L-lactate oxidase of Streptococcus iniae (Streptococcus shiloi).